The chain runs to 215 residues: Protein Nef (215 aa).

The N-myristoyl glycine; by host moiety is linked to residue G2. S6 carries the post-translational modification Phosphoserine; by host. Positions 71–74 (EEEE) are acidic; interacts with host PACS1 and PACS2; stabilizes the interaction of NEF/MHC-I with host AP1M1; necessary for MHC-I internalization. Residues 78-87 (PVRPQVPLRP) are SH3-binding; interaction with Src family tyrosine kinases. Residues 81–84 (PQVP) carry the PxxP; stabilizes the interaction of NEF/MHC-I with host AP1M1; necessary for MHC-I internalization motif. Residues 117–133 (EILDLWVYHTQGFFPDW) form a mediates dimerization, Nef-PTE1 interaction region. The interval 157 to 189 (VDPAEVEETTEGEDNCLLHPINQHGMEDEHREI) is binding to ATP6V1H. The short motif at 173 to 174 (LL) is the Dileucine internalization motif; necessary for CD4 internalization element. The short motif at 183–184 (ED) is the Diacidic; necessary for CD4 internalization element.

The protein belongs to the lentivirus primate group Nef protein family. Monomer; cytosolic form. Homodimer; membrane bound form. Interacts with Nef associated p21-activated kinase (PAK2); this interaction activates PAK2. Associates with the Nef-MHC-I-AP1 complex; this complex is required for MHC-I internalization. Interacts (via C-terminus) with host PI3-kinase. Interacts with host PACS1; this interaction seems to be weak. Interacts with host PACS2. Interacts with host LCK and MAPK3; these interactions inhibit the kinase activity of the latter. Interacts with host ATP6V1H; this interaction may play a role in CD4 endocytosis. Associates with the CD4-Nef-AP2 complex; this complex is required for CD4 internalization. Interacts with host AP2 subunit alpha and AP2 subunit sigma2. Interacts with TCR-zeta chain; this interaction up-regulates the Fas ligand (FasL) surface expression. Interacts with host HCK, LYN, and SRC; these interactions activate the Src family kinases. Interacts with MAP3K5; this interaction inhibits the Fas and TNFR-mediated death signals. Interacts with beta-COP and PTE1. Interacts with human RACK1; this increases Nef phosphorylation by PKC. Interacts with TP53; this interaction decreases the half-life of TP53, protecting the infected cell against p53-mediated apoptosis. Post-translationally, the virion-associated Nef proteins are cleaved by the viral protease to release the soluble C-terminal core protein. Nef is probably cleaved concomitantly with viral structural proteins on maturation of virus particles. In terms of processing, myristoylated. Phosphorylated on serine residues, probably by host PKCdelta and theta.

It is found in the host cell membrane. The protein resides in the virion. It localises to the secreted. The protein localises to the host Golgi apparatus membrane. Its function is as follows. Factor of infectivity and pathogenicity, required for optimal virus replication. Alters numerous pathways of T-lymphocyte function and down-regulates immunity surface molecules in order to evade host defense and increase viral infectivity. Alters the functionality of other immunity cells, like dendritic cells, monocytes/macrophages and NK cells. In infected CD4(+) T-lymphocytes, down-regulates the surface MHC-I, mature MHC-II, CD4, CD28, CCR5 and CXCR4 molecules. Mediates internalization and degradation of host CD4 through the interaction of with the cytoplasmic tail of CD4, the recruitment of AP-2 (clathrin adapter protein complex 2), internalization through clathrin coated pits, and subsequent transport to endosomes and lysosomes for degradation. Diverts host MHC-I molecules to the trans-Golgi network-associated endosomal compartments by an endocytic pathway to finally target them for degradation. MHC-I down-regulation may involve AP-1 (clathrin adapter protein complex 1) or possibly Src family kinase-ZAP70/Syk-PI3K cascade recruited by PACS2. In consequence infected cells are masked for immune recognition by cytotoxic T-lymphocytes. Decreasing the number of immune receptors also prevents reinfection by more HIV particles (superinfection). Down-regulates host SERINC3 and SERINC5 thereby excluding these proteins from the viral particles. Virion infectivity is drastically higher when SERINC3 or SERINC5 are excluded from the viral envelope, because these host antiviral proteins impair the membrane fusion event necessary for subsequent virion penetration. In terms of biological role, bypasses host T-cell signaling by inducing a transcriptional program nearly identical to that of anti-CD3 cell activation. Interaction with TCR-zeta chain up-regulates the Fas ligand (FasL). Increasing surface FasL molecules and decreasing surface MHC-I molecules on infected CD4(+) cells send attacking cytotoxic CD8+ T-lymphocytes into apoptosis. Functionally, plays a role in optimizing the host cell environment for viral replication without causing cell death by apoptosis. Protects the infected cells from apoptosis in order to keep them alive until the next virus generation is ready to strike. Inhibits the Fas and TNFR-mediated death signals by blocking MAP3K5/ASK1. Decreases the half-life of TP53, protecting the infected cell against p53-mediated apoptosis. Inhibits the apoptotic signals regulated by the Bcl-2 family proteins through the formation of a Nef/PI3-kinase/PAK2 complex that leads to activation of PAK2 and induces phosphorylation of host BAD. Its function is as follows. Extracellular Nef protein targets CD4(+) T-lymphocytes for apoptosis by interacting with CXCR4 surface receptors. The protein is Protein Nef of Human immunodeficiency virus type 1 group M subtype K (isolate 96CM-MP535) (HIV-1).